A 142-amino-acid chain; its full sequence is Ctenidin-3 (142 aa).

A signal peptide spans 1 to 19 (MKHLIPLIVMASVVLAVYA). Tyr139 bears the Tyrosine amide mark.

As to expression, expressed in hemocytes (at protein level).

The protein localises to the secreted. Its function is as follows. Antimicrobial protein with bacteriostatic activity against the Gram-negative bacterium E.coli, and very weak activity against the Gram-positive bacterium S.aureus. Lacks activity against the yeast C.albicans. This Cupiennius salei (American wandering spider) protein is Ctenidin-3.